Here is an 829-residue protein sequence, read N- to C-terminus: Exocyst complex component SEC10b (829 aa).

Positions R244–S266 form a coiled coil.

The protein belongs to the SEC10 family. As to quaternary structure, the exocyst complex is composed of SEC3, SEC5, SEC6, SEC8, SEC10, EXO70A1 and EXO84B. Interacts with EXO84B. Binds to EXO70E2. Expressed in seedlings, roots, leaves and flowers.

The protein localises to the cytoplasm. The protein resides in the cytosol. It is found in the secreted. It localises to the extracellular exosome. In terms of biological role, component of the exocyst complex involved in the docking of exocytic vesicles with fusion sites on the plasma membrane during regulated or polarized secretion. Involved in polarized cell growth and organ morphogenesis. During cytokinesis, involved in cell plate initiation, cell plate maturation and formation of new primary cell wall. The protein is Exocyst complex component SEC10b of Arabidopsis thaliana (Mouse-ear cress).